The sequence spans 116 residues: Large ribosomal subunit protein bL19 (116 aa).

The protein belongs to the bacterial ribosomal protein bL19 family.

This protein is located at the 30S-50S ribosomal subunit interface and may play a role in the structure and function of the aminoacyl-tRNA binding site. The polypeptide is Large ribosomal subunit protein bL19 (Pseudothermotoga lettingae (strain ATCC BAA-301 / DSM 14385 / NBRC 107922 / TMO) (Thermotoga lettingae)).